A 129-amino-acid chain; its full sequence is Small ribosomal subunit protein uS11 (129 aa).

Belongs to the universal ribosomal protein uS11 family. Part of the 30S ribosomal subunit. Interacts with proteins S7 and S18. Binds to IF-3.

Its function is as follows. Located on the platform of the 30S subunit, it bridges several disparate RNA helices of the 16S rRNA. Forms part of the Shine-Dalgarno cleft in the 70S ribosome. This chain is Small ribosomal subunit protein uS11, found in Nitrosospira multiformis (strain ATCC 25196 / NCIMB 11849 / C 71).